We begin with the raw amino-acid sequence, 515 residues long: Putative asparagine synthetase [glutamine-hydrolyzing] 2 (515 aa).

Residue Cys2 is the For GATase activity of the active site. In terms of domain architecture, Glutamine amidotransferase type-2 spans 2 to 229 (CGINGIIRFG…ARQNLIFDLD (228 aa)). L-glutamine-binding positions include 52 to 56 (RLAIL), 92 to 94 (NGE), and Asp114. Residues Ile306 and 378 to 379 (SG) each bind ATP.

The protein belongs to the asparagine synthetase family.

It carries out the reaction L-aspartate + L-glutamine + ATP + H2O = L-asparagine + L-glutamate + AMP + diphosphate + H(+). The protein operates within amino-acid biosynthesis; L-asparagine biosynthesis; L-asparagine from L-aspartate (L-Gln route): step 1/1. This chain is Putative asparagine synthetase [glutamine-hydrolyzing] 2, found in Methanocaldococcus jannaschii (strain ATCC 43067 / DSM 2661 / JAL-1 / JCM 10045 / NBRC 100440) (Methanococcus jannaschii).